The sequence spans 61 residues: Large ribosomal subunit protein bL32 (61 aa).

Over residues 1-22 the composition is skewed to basic residues; it reads MAVPKKKTSKSRRDMRRSHHAL. The segment at 1-27 is disordered; it reads MAVPKKKTSKSRRDMRRSHHALKPSAY.

The protein belongs to the bacterial ribosomal protein bL32 family.

This chain is Large ribosomal subunit protein bL32, found in Rhodospirillum rubrum (strain ATCC 11170 / ATH 1.1.1 / DSM 467 / LMG 4362 / NCIMB 8255 / S1).